The following is an 85-amino-acid chain: U1-ctenitoxin-Pn1a (85 aa).

A signal peptide spans 1–16; it reads MKVAIVFLSLLVLAFA. Residues 17-34 constitute a propeptide that is removed on maturation; it reads SESIEENREEFPVEESAR. 5 disulfides stabilise this stretch: cysteine 35–cysteine 49, cysteine 42–cysteine 55, cysteine 46–cysteine 81, cysteine 48–cysteine 65, and cysteine 57–cysteine 63. A propeptide spanning residues 82–85 is cleaved from the precursor; sequence QNKI.

This sequence belongs to the neurotoxin 03 (Tx2) family. 05 subfamily. In terms of tissue distribution, expressed by the venom gland.

The protein localises to the secreted. Functionally, insecticidal neurotoxin that reversibly inhibits the N-methyl-D-aspartate (NMDA)-subtype of ionotropic glutamate receptor (GRIN) and inhibits inactivation of insect sodium channels (Nav). In vivo, is highly toxic to insects. The chain is U1-ctenitoxin-Pn1a from Phoneutria nigriventer (Brazilian armed spider).